Reading from the N-terminus, the 453-residue chain is Glutamyl-tRNA(Gln) amidotransferase subunit A (453 aa).

Residues Lys-56 and Ser-131 each act as charge relay system in the active site. The active-site Acyl-ester intermediate is the Ser-155.

This sequence belongs to the amidase family. GatA subfamily. As to quaternary structure, heterotrimer of A, B and C subunits.

The catalysed reaction is L-glutamyl-tRNA(Gln) + L-glutamine + ATP + H2O = L-glutaminyl-tRNA(Gln) + L-glutamate + ADP + phosphate + H(+). In terms of biological role, allows the formation of correctly charged Gln-tRNA(Gln) through the transamidation of misacylated Glu-tRNA(Gln) in organisms which lack glutaminyl-tRNA synthetase. The reaction takes place in the presence of glutamine and ATP through an activated gamma-phospho-Glu-tRNA(Gln). The chain is Glutamyl-tRNA(Gln) amidotransferase subunit A from Campylobacter jejuni subsp. doylei (strain ATCC BAA-1458 / RM4099 / 269.97).